The chain runs to 99 residues: High mobility group nucleosome-binding domain-containing protein 3 (99 aa).

Composition is skewed to basic and acidic residues over residues 1–25 (MPKR…EPTR), 39–53 (PEPK…KEPG), and 62–72 (GKKEEKQEAGK). A disordered region spans residues 1–99 (MPKRKSPENT…KTESVDNEGE (99 aa)). Position 6 is a phosphoserine (serine 6). Threonine 10 carries the phosphothreonine modification. 2 positions are modified to phosphoserine: serine 78 and serine 93. Residues 81-93 (GETKAEEAQKTES) are compositionally biased toward basic and acidic residues.

This sequence belongs to the HMGN family. Interacts with the ligand binding domain of the thyroid receptor (TR) (in vitro). Requires the presence of thyroid hormone for its interaction. Interacts with transcriptional regulator SEHBP. Interacts with nucleosomes. In terms of tissue distribution, expressed in kidney, lung, pancreas, testis, skeletal muscle, heart, thyroid gland, pituitary gland, prostate and uterus. Low expression in liver, spleen, placenta and ovaries.

Its subcellular location is the nucleus. Its function is as follows. Binds to nucleosomes, regulating chromatin structure and consequently, chromatin-dependent processes such as transcription, DNA replication and DNA repair. Affects both insulin and glucagon levels and modulates the expression of pancreatic genes involved in insulin secretion. Regulates the expression of the glucose transporter SLC2A2 by binding specifically to its promoter region and recruiting PDX1 and additional transcription factors. Regulates the expression of SLC6A9, a glycine transporter which regulates the glycine concentration in synaptic junctions in the central nervous system, by binding to its transcription start site. May play a role in ocular development and astrocyte function. The chain is High mobility group nucleosome-binding domain-containing protein 3 (HMGN3) from Homo sapiens (Human).